The following is a 232-amino-acid chain: Ribonuclease P protein component 3 (232 aa).

The protein belongs to the eukaryotic/archaeal RNase P protein component 3 family. Consists of a catalytic RNA component and at least 4-5 protein subunits.

It is found in the cytoplasm. The enzyme catalyses Endonucleolytic cleavage of RNA, removing 5'-extranucleotides from tRNA precursor.. In terms of biological role, part of ribonuclease P, a protein complex that generates mature tRNA molecules by cleaving their 5'-ends. The polypeptide is Ribonuclease P protein component 3 (Methanococcus maripaludis (strain C6 / ATCC BAA-1332)).